The following is a 715-amino-acid chain: Ribosomal RNA large subunit methyltransferase K/L (715 aa).

Residues 43 to 154 (TQYRALLWSR…RDDLVLSLDL (112 aa)) enclose the THUMP domain.

This sequence belongs to the methyltransferase superfamily. RlmKL family.

The protein resides in the cytoplasm. The enzyme catalyses guanosine(2445) in 23S rRNA + S-adenosyl-L-methionine = N(2)-methylguanosine(2445) in 23S rRNA + S-adenosyl-L-homocysteine + H(+). It catalyses the reaction guanosine(2069) in 23S rRNA + S-adenosyl-L-methionine = N(2)-methylguanosine(2069) in 23S rRNA + S-adenosyl-L-homocysteine + H(+). In terms of biological role, specifically methylates the guanine in position 2445 (m2G2445) and the guanine in position 2069 (m7G2069) of 23S rRNA. The chain is Ribosomal RNA large subunit methyltransferase K/L from Mannheimia succiniciproducens (strain KCTC 0769BP / MBEL55E).